The following is a 416-amino-acid chain: Tryptophan synthase beta chain (416 aa).

Residues 1-23 (MTSTLPSQPKDMELANSSRPSVH) are disordered. At Lys109 the chain carries N6-(pyridoxal phosphate)lysine.

The protein belongs to the TrpB family. Tetramer of two alpha and two beta chains. Pyridoxal 5'-phosphate serves as cofactor.

It carries out the reaction (1S,2R)-1-C-(indol-3-yl)glycerol 3-phosphate + L-serine = D-glyceraldehyde 3-phosphate + L-tryptophan + H2O. It functions in the pathway amino-acid biosynthesis; L-tryptophan biosynthesis; L-tryptophan from chorismate: step 5/5. Functionally, the beta subunit is responsible for the synthesis of L-tryptophan from indole and L-serine. This chain is Tryptophan synthase beta chain, found in Prochlorococcus marinus (strain MIT 9211).